The primary structure comprises 187 residues: Adenylate kinase (187 aa).

10-15 (GSGKGT) contributes to the ATP binding site. The NMP stretch occupies residues 30 to 59 (STGDLLRSEVVAGTPLGLQAKQVMAQGDLV). Residues threonine 31, arginine 36, 57-59 (DLV), 85-88 (GYPR), and glutamine 92 each bind AMP. Residues 126–136 (GRAQAEGREDD) form an LID region. Arginine 127 is an ATP binding site. Positions 133 and 144 each coordinate AMP. An ATP-binding site is contributed by glycine 172.

This sequence belongs to the adenylate kinase family. Monomer.

The protein resides in the cytoplasm. The catalysed reaction is AMP + ATP = 2 ADP. The protein operates within purine metabolism; AMP biosynthesis via salvage pathway; AMP from ADP: step 1/1. In terms of biological role, catalyzes the reversible transfer of the terminal phosphate group between ATP and AMP. Plays an important role in cellular energy homeostasis and in adenine nucleotide metabolism. This Xylella fastidiosa (strain 9a5c) protein is Adenylate kinase.